We begin with the raw amino-acid sequence, 162 residues long: Cyanate hydratase (162 aa).

Residues R90, E93, and S116 contribute to the active site.

It belongs to the cyanase family.

It carries out the reaction cyanate + hydrogencarbonate + 3 H(+) = NH4(+) + 2 CO2. In terms of biological role, catalyzes the reaction of cyanate with bicarbonate to produce ammonia and carbon dioxide. The polypeptide is Cyanate hydratase (Populus trichocarpa (Western balsam poplar)).